The chain runs to 426 residues: Serine hydroxymethyltransferase (426 aa).

(6S)-5,6,7,8-tetrahydrofolate is bound by residues Leu121 and 125 to 127 (GHL). The residue at position 230 (Lys230) is an N6-(pyridoxal phosphate)lysine. 354–356 (SPF) contributes to the (6S)-5,6,7,8-tetrahydrofolate binding site.

The protein belongs to the SHMT family. Homodimer. Pyridoxal 5'-phosphate serves as cofactor.

Its subcellular location is the cytoplasm. It catalyses the reaction (6R)-5,10-methylene-5,6,7,8-tetrahydrofolate + glycine + H2O = (6S)-5,6,7,8-tetrahydrofolate + L-serine. It functions in the pathway one-carbon metabolism; tetrahydrofolate interconversion. The protein operates within amino-acid biosynthesis; glycine biosynthesis; glycine from L-serine: step 1/1. Its function is as follows. Catalyzes the reversible interconversion of serine and glycine with tetrahydrofolate (THF) serving as the one-carbon carrier. This reaction serves as the major source of one-carbon groups required for the biosynthesis of purines, thymidylate, methionine, and other important biomolecules. Also exhibits THF-independent aldolase activity toward beta-hydroxyamino acids, producing glycine and aldehydes, via a retro-aldol mechanism. The polypeptide is Serine hydroxymethyltransferase (Gloeobacter violaceus (strain ATCC 29082 / PCC 7421)).